A 398-amino-acid chain; its full sequence is Carbamoyl phosphate synthase small chain (398 aa).

The segment at 1-204 (MSPLLPSFPP…PAYGTLDTGK (204 aa)) is CPSase. L-glutamine-binding residues include Ser-53, Gly-256, and Gly-258. Residues 208 to 395 (KVVAYDFGVK…VELMNAASKK (188 aa)) enclose the Glutamine amidotransferase type-1 domain. The active-site Nucleophile is Cys-284. L-glutamine-binding residues include Leu-285, Gln-288, Asn-326, Gly-328, and Phe-329. Residues His-368 and Glu-370 contribute to the active site.

It belongs to the CarA family. Composed of two chains; the small (or glutamine) chain promotes the hydrolysis of glutamine to ammonia, which is used by the large (or ammonia) chain to synthesize carbamoyl phosphate. Tetramer of heterodimers (alpha,beta)4.

It carries out the reaction hydrogencarbonate + L-glutamine + 2 ATP + H2O = carbamoyl phosphate + L-glutamate + 2 ADP + phosphate + 2 H(+). The enzyme catalyses L-glutamine + H2O = L-glutamate + NH4(+). It functions in the pathway amino-acid biosynthesis; L-arginine biosynthesis; carbamoyl phosphate from bicarbonate: step 1/1. It participates in pyrimidine metabolism; UMP biosynthesis via de novo pathway; (S)-dihydroorotate from bicarbonate: step 1/3. Its function is as follows. Small subunit of the glutamine-dependent carbamoyl phosphate synthetase (CPSase). CPSase catalyzes the formation of carbamoyl phosphate from the ammonia moiety of glutamine, carbonate, and phosphate donated by ATP, constituting the first step of 2 biosynthetic pathways, one leading to arginine and/or urea and the other to pyrimidine nucleotides. The small subunit (glutamine amidotransferase) binds and cleaves glutamine to supply the large subunit with the substrate ammonia. This Polynucleobacter necessarius subsp. necessarius (strain STIR1) protein is Carbamoyl phosphate synthase small chain.